Here is a 308-residue protein sequence, read N- to C-terminus: MVVGRGLLGRRSLAALGAACARRGLGPALLGVFCHTDLRKNLTVDEGTMKVEVLPALTDNYMYLVIDDETKEAAIVDPVQPQKVVDAARKHGVKLTTVLTTHHHWDHAGGNEKLVKLESGLKVYGGDDRIGALTHKITHLSTLQVGSLNVKCLATPCHTSGHICYFVSKPGGSEPPAVFTGDTLFVAGCGKFYEGTADEMCKALLEVLGRLPPDTRVYCGHEYTINNLKFARHVEPGNAAIREKLAWAKEKYSIGEPTVPSTLAEEFTYNPFMRVREKTVQQHAGETDPVTTMRAVRREKDQFKMPRD.

The transit peptide at 1-13 (MVVGRGLLGRRSL) directs the protein to the mitochondrion. Zn(2+) is bound by residues histidine 102, histidine 104, aspartate 106, and histidine 107. An N6-acetyllysine modification is found at lysine 116. 2 residues coordinate Zn(2+): histidine 158 and aspartate 182. Substrate-binding positions include 191–193 (KFY) and 221–223 (HEY). Histidine 221 contributes to the Zn(2+) binding site. Lysine 229 carries the post-translational modification N6-acetyllysine; alternate. Residue lysine 229 is modified to N6-succinyllysine; alternate. Residue 297–300 (RREK) coordinates substrate.

It belongs to the metallo-beta-lactamase superfamily. Glyoxalase II family. Monomer. Zn(2+) serves as cofactor. In terms of tissue distribution, expressed in liver and kidney.

It localises to the mitochondrion matrix. The protein resides in the cytoplasm. It carries out the reaction an S-(2-hydroxyacyl)glutathione + H2O = a 2-hydroxy carboxylate + glutathione + H(+). The catalysed reaction is (R)-S-lactoylglutathione + H2O = (R)-lactate + glutathione + H(+). It participates in secondary metabolite metabolism; methylglyoxal degradation; (R)-lactate from methylglyoxal: step 2/2. Functionally, thiolesterase that catalyzes the hydrolysis of S-D-lactoyl-glutathione to form glutathione and D-lactic acid. This chain is Hydroxyacylglutathione hydrolase, mitochondrial (HAGH), found in Homo sapiens (Human).